Here is a 261-residue protein sequence, read N- to C-terminus: 5'-nucleotidase SurE (261 aa).

Residues aspartate 8, aspartate 9, serine 43, and asparagine 96 each coordinate a divalent metal cation.

This sequence belongs to the SurE nucleotidase family. It depends on a divalent metal cation as a cofactor.

The protein localises to the cytoplasm. It catalyses the reaction a ribonucleoside 5'-phosphate + H2O = a ribonucleoside + phosphate. In terms of biological role, nucleotidase that shows phosphatase activity on nucleoside 5'-monophosphates. This Roseobacter denitrificans (strain ATCC 33942 / OCh 114) (Erythrobacter sp. (strain OCh 114)) protein is 5'-nucleotidase SurE.